Here is a 227-residue protein sequence, read N- to C-terminus: UPF0173 metal-dependent hydrolase BCE_4747 (227 aa).

This sequence belongs to the UPF0173 family.

In Bacillus cereus (strain ATCC 10987 / NRS 248), this protein is UPF0173 metal-dependent hydrolase BCE_4747.